Reading from the N-terminus, the 571-residue chain is Putative clathrin assembly protein At2g01600 (571 aa).

Positions 24–161 constitute an ENTH domain; sequence RVNSEYADLD…ECFRVLKYDT (138 aa). Disordered regions lie at residues 325 to 346 and 474 to 571; these read YRPDDGLTTEDTEPSHEEREML and PAPN…TGLI. Positions 337–346 are enriched in basic and acidic residues; the sequence is EPSHEEREML. Positions 508–522 are enriched in low complexity; the sequence is QQTYQHQPQPTYQHQ. Composition is skewed to polar residues over residues 523–532 and 543–571; these read SNPPTNNSNP and PVSQQPNTSGYGDFSVNQHNNPFRSTGLI.

It is found in the membrane. The protein resides in the clathrin-coated pit. It localises to the golgi apparatus. Its subcellular location is the cytoplasmic vesicle. The protein localises to the clathrin-coated vesicle. The polypeptide is Putative clathrin assembly protein At2g01600 (Arabidopsis thaliana (Mouse-ear cress)).